Here is a 638-residue protein sequence, read N- to C-terminus: Nucleolar protein 4 (638 aa).

4 disordered regions span residues 210–312 (QQDE…SPLS), 343–403 (EREA…TDGV), 503–535 (NAAKRMRLERQQDESAPADKQCKPEATQATYST), and 573–603 (SSGPTDLSMKRQLATSSGSSSSSNSRPQLSP). Positions 211 to 225 (QDEDESSIESDEFDM) are enriched in acidic residues. Polar residues-rich tracts occupy residues 229-254 (TRMSAVNSDLSSNLEERMQSPQNLHG), 263-281 (ESFNGNETLGHSSIASGGT), 302-312 (QPLNLSDSPLS), and 351-363 (SKSPAHSYSSYDS). Basic and acidic residues-rich tracts occupy residues 364 to 374 (GKNESVDRGAE), 391 to 403 (HDDSEKVNETDGV), and 503 to 515 (NAAKRMRLERQQD). Over residues 588–597 (SSGSSSSSNS) the composition is skewed to low complexity.

Expressed predominantly in fetal brain, adult brain and testis.

The protein localises to the nucleus. It is found in the nucleolus. This Homo sapiens (Human) protein is Nucleolar protein 4 (NOL4).